Here is a 30-residue protein sequence, read N- to C-terminus: KETAAAKFERQHMDPAPAAAXXQNYCNQMM.

Residues 1 to 13 are compositionally biased toward basic and acidic residues; it reads KETAAAKFERQHM. Positions 1-21 are disordered; sequence KETAAAKFERQHMDPAPAAAX. Substrate-binding residues include Lys-7 and Arg-10. His-12 functions as the Proton acceptor in the catalytic mechanism.

Belongs to the pancreatic ribonuclease family. As to quaternary structure, monomer. Interacts with and forms tight 1:1 complexes with RNH1. Dimerization of two such complexes may occur. Interaction with RNH1 inhibits this protein. As to expression, pancreas.

The protein localises to the secreted. It carries out the reaction an [RNA] containing cytidine + H2O = an [RNA]-3'-cytidine-3'-phosphate + a 5'-hydroxy-ribonucleotide-3'-[RNA].. The catalysed reaction is an [RNA] containing uridine + H2O = an [RNA]-3'-uridine-3'-phosphate + a 5'-hydroxy-ribonucleotide-3'-[RNA].. Functionally, endonuclease that catalyzes the cleavage of RNA on the 3' side of pyrimidine nucleotides. Acts on single-stranded and double-stranded RNA. In Odocoileus virginianus virginianus (Virginia white-tailed deer), this protein is Ribonuclease pancreatic (RNASE1).